We begin with the raw amino-acid sequence, 249 residues long: Putative SAP domain-containing protein 049L (249 aa).

3 stretches are compositionally biased toward basic and acidic residues: residues Met-1–Pro-12, Pro-22–Cys-38, and Lys-95–Glu-107. Positions Met-1–Gly-110 are disordered. The SAP domain occupies Leu-119–Asp-153.

The polypeptide is Putative SAP domain-containing protein 049L (Frog virus 3 (isolate Goorha) (FV-3)).